Consider the following 291-residue polypeptide: ATP synthase gamma chain (291 aa).

Belongs to the ATPase gamma chain family. As to quaternary structure, F-type ATPases have 2 components, CF(1) - the catalytic core - and CF(0) - the membrane proton channel. CF(1) has five subunits: alpha(3), beta(3), gamma(1), delta(1), epsilon(1). CF(0) has three main subunits: a, b and c.

It localises to the cell inner membrane. Produces ATP from ADP in the presence of a proton gradient across the membrane. The gamma chain is believed to be important in regulating ATPase activity and the flow of protons through the CF(0) complex. The chain is ATP synthase gamma chain from Burkholderia cenocepacia (strain ATCC BAA-245 / DSM 16553 / LMG 16656 / NCTC 13227 / J2315 / CF5610) (Burkholderia cepacia (strain J2315)).